Reading from the N-terminus, the 176-residue chain is Large ribosomal subunit protein uL10 (176 aa).

It belongs to the universal ribosomal protein uL10 family. In terms of assembly, part of the ribosomal stalk of the 50S ribosomal subunit. The N-terminus interacts with L11 and the large rRNA to form the base of the stalk. The C-terminus forms an elongated spine to which L12 dimers bind in a sequential fashion forming a multimeric L10(L12)X complex.

Its function is as follows. Forms part of the ribosomal stalk, playing a central role in the interaction of the ribosome with GTP-bound translation factors. The protein is Large ribosomal subunit protein uL10 of Marinobacter nauticus (strain ATCC 700491 / DSM 11845 / VT8) (Marinobacter aquaeolei).